The following is a 64-amino-acid chain: Conotoxin Im11.1 (64 aa).

The N-terminal stretch at 1–26 is a signal peptide; it reads MMFRLTSVSCFLLVIACLNLVVLTNA. Cystine bridges form between cysteine 27–cysteine 41, cysteine 34–cysteine 46, cysteine 40–cysteine 50, and cysteine 45–cysteine 54. Asparagine 57 carries the asparagine amide modification. A propeptide spanning residues 61–64 is cleaved from the precursor; the sequence is ATFQ.

Belongs to the conotoxin I2 superfamily. Expressed by the venom duct.

It is found in the secreted. The sequence is that of Conotoxin Im11.1 from Conus imperialis (Imperial cone).